A 350-amino-acid chain; its full sequence is MTKITNDLFLRAARKEQVDKIPVWYMRQAGRSQPEYRKLKEKYSLFEITHQPEICAYVTKLPVDQYGVDAAILYKDIMTPLPGMGIDVEIKSGIGPVIHNPIRTFQDVDKLSIFKPEIEVPYVLDTIKLLADDMLEVPLIGFAGAPFTLASYMIEGGPSKNYHLTKSFMYREPEVWSILMEKLGRMTATYLIAQINAGASAVQLFDSWVGALSRADYTKYIRPVIEMIVREVKAVHPTTPIIMQAVGASHLLEEWETMPLDVVGVDWRETLTGARKKVPSKAIQGNLDPSTLLAPEKCLEEAERIIQEGILKPGYIFNLGHGVFPEVQPEMLKKLTNYIHDRSEILLKKG.

Substrate is bound by residues 27–31 (RQAGR), F46, D76, Y152, S207, and H321.

Belongs to the uroporphyrinogen decarboxylase family. As to quaternary structure, homodimer.

The protein localises to the cytoplasm. It catalyses the reaction uroporphyrinogen III + 4 H(+) = coproporphyrinogen III + 4 CO2. The protein operates within porphyrin-containing compound metabolism; protoporphyrin-IX biosynthesis; coproporphyrinogen-III from 5-aminolevulinate: step 4/4. Functionally, catalyzes the decarboxylation of four acetate groups of uroporphyrinogen-III to yield coproporphyrinogen-III. The polypeptide is Uroporphyrinogen decarboxylase (Listeria welshimeri serovar 6b (strain ATCC 35897 / DSM 20650 / CCUG 15529 / CIP 8149 / NCTC 11857 / SLCC 5334 / V8)).